We begin with the raw amino-acid sequence, 332 residues long: Glycerol-3-phosphate dehydrogenase [NAD(P)+] (332 aa).

NADPH-binding residues include Trp-13, Arg-33, and Lys-105. Sn-glycerol 3-phosphate contacts are provided by Lys-105, Gly-134, and Ser-136. Ala-138 provides a ligand contact to NADPH. Sn-glycerol 3-phosphate-binding residues include Lys-189, Asp-242, Ser-252, Arg-253, and Asn-254. Lys-189 serves as the catalytic Proton acceptor. An NADPH-binding site is contributed by Arg-253. An NADPH-binding site is contributed by Glu-279.

It belongs to the NAD-dependent glycerol-3-phosphate dehydrogenase family.

The protein resides in the cytoplasm. It catalyses the reaction sn-glycerol 3-phosphate + NAD(+) = dihydroxyacetone phosphate + NADH + H(+). It carries out the reaction sn-glycerol 3-phosphate + NADP(+) = dihydroxyacetone phosphate + NADPH + H(+). Its pathway is membrane lipid metabolism; glycerophospholipid metabolism. Functionally, catalyzes the reduction of the glycolytic intermediate dihydroxyacetone phosphate (DHAP) to sn-glycerol 3-phosphate (G3P), the key precursor for phospholipid synthesis. The sequence is that of Glycerol-3-phosphate dehydrogenase [NAD(P)+] from Halorhodospira halophila (strain DSM 244 / SL1) (Ectothiorhodospira halophila (strain DSM 244 / SL1)).